The primary structure comprises 463 residues: Argininosuccinate lyase (463 aa).

It belongs to the lyase 1 family. Argininosuccinate lyase subfamily.

The protein localises to the cytoplasm. The enzyme catalyses 2-(N(omega)-L-arginino)succinate = fumarate + L-arginine. It functions in the pathway amino-acid biosynthesis; L-arginine biosynthesis; L-arginine from L-ornithine and carbamoyl phosphate: step 3/3. This Streptococcus pneumoniae (strain 70585) protein is Argininosuccinate lyase.